The chain runs to 496 residues: Galactose-1-phosphate uridylyltransferase (496 aa).

The protein belongs to the galactose-1-phosphate uridylyltransferase type 2 family.

The protein localises to the cytoplasm. The enzyme catalyses alpha-D-galactose 1-phosphate + UDP-alpha-D-glucose = alpha-D-glucose 1-phosphate + UDP-alpha-D-galactose. It functions in the pathway carbohydrate metabolism; galactose metabolism. This chain is Galactose-1-phosphate uridylyltransferase, found in Staphylococcus saprophyticus subsp. saprophyticus (strain ATCC 15305 / DSM 20229 / NCIMB 8711 / NCTC 7292 / S-41).